The chain runs to 439 residues: Microfibrillar-associated protein 1A (439 aa).

The interval 1-200 (MSVPSALMKQ…SEDEMEPRLK (200 aa)) is disordered. N-acetylserine is present on serine 2. Basic and acidic residues predominate over residues 23–34 (RNEKGEISMEKV). A phosphoserine mark is found at serine 52 and serine 53. Basic and acidic residues predominate over residues 61-70 (QFIKKAKEQE). Lysine 67 participates in a covalent cross-link: Glycyl lysine isopeptide (Lys-Gly) (interchain with G-Cter in SUMO2). The span at 71-81 (AEPEEQEEDSS) shows a compositional bias: acidic residues. 5 positions are modified to phosphoserine: serine 94, serine 116, serine 118, serine 132, and serine 133. Composition is skewed to acidic residues over residues 112 to 122 (VVGESDSEVEG) and 131 to 144 (DSSE…DDEE). A compositionally biased stretch (basic and acidic residues) spans 145-163 (IERRRGMMRQRAQERKNEE). Residues 178 to 195 (ESESESEYEEYTDSEDEM) show a composition bias toward acidic residues. A Glycyl lysine isopeptide (Lys-Gly) (interchain with G-Cter in SUMO2) cross-link involves residue lysine 249. Phosphothreonine is present on threonine 267. Residue lysine 357 forms a Glycyl lysine isopeptide (Lys-Gly) (interchain with G-Cter in SUMO2) linkage. Position 361 is a phosphoserine (serine 361). Glycyl lysine isopeptide (Lys-Gly) (interchain with G-Cter in SUMO2) cross-links involve residues lysine 371, lysine 381, lysine 415, and lysine 418. Serine 432 is subject to Phosphoserine.

The protein belongs to the MFAP1 family. As to quaternary structure, component of the spliceosome B complex. Interacts with PRPF38A (via N-terminal interaction domain).

The protein resides in the nucleus. In terms of biological role, involved in pre-mRNA splicing as a component of the spliceosome. This Mus musculus (Mouse) protein is Microfibrillar-associated protein 1A.